Consider the following 227-residue polypeptide: Cytidylate kinase (227 aa).

ATP is bound at residue 10–18; that stretch reads GPASSGKST.

This sequence belongs to the cytidylate kinase family. Type 1 subfamily.

The protein resides in the cytoplasm. It carries out the reaction CMP + ATP = CDP + ADP. It catalyses the reaction dCMP + ATP = dCDP + ADP. This is Cytidylate kinase from Streptococcus agalactiae serotype III (strain NEM316).